The chain runs to 64 residues: Antimicrobial peptide 1 (64 aa).

An N-terminal signal peptide occupies residues 1-26; that stretch reads MAKVSSSLLKFAIVLILVLSMSAIIS. 3 disulfide bridges follow: Cys29-Cys46, Cys36-Cys50, and Cys45-Cys61.

The protein belongs to the AMP family.

The protein localises to the secreted. Possesses antifungal and antibacterial activity. This Mesembryanthemum crystallinum (Common ice plant) protein is Antimicrobial peptide 1.